The following is a 220-amino-acid chain: Ribonuclease HII (220 aa).

The RNase H type-2 domain occupies 32 to 220 (KHIAGIDEAG…FAPIKGRFDC (189 aa)). Positions 38, 39, and 130 each coordinate a divalent metal cation.

This sequence belongs to the RNase HII family. The cofactor is Mn(2+). It depends on Mg(2+) as a cofactor.

It is found in the cytoplasm. The catalysed reaction is Endonucleolytic cleavage to 5'-phosphomonoester.. In terms of biological role, endonuclease that specifically degrades the RNA of RNA-DNA hybrids. This Brucella suis (strain ATCC 23445 / NCTC 10510) protein is Ribonuclease HII.